The chain runs to 803 residues: MWIQVRTIDGSQTRTIEDVSRKATIEELRERVWALFDVRPECQRLFYRGKQLENGYTLFDYDVGLNDIIQLLVRPDSSLPSTSKQNDAQVKPSSHNPPKVKKTARGGSSSQPSTSARTCLIDPGFGLYKVNELVDARDVGLGAWFEAHIHSVTRASDGHSRGKTPLKNGSSYKRTNGNVNHNSKENTNKLDNVPSTSNSDSVAADEDVIYHIEYDEYPESGILEMNVKDLRPRARTILKWNELNVGDVVMVNYNVENPGKRGFWYDAEITTLKTISRTKKEVRVKVFLGGSEGTLNDCRVMSVDEIFKIEKPGAHPISFADGKFLRKNDPECDLCGGDPDKTCHMCSCHKCGEKRDPNMQLLCDECNMAYHIYCLSPPLDKVPEEEYWYCPSCKTDSSEVVKAGERLKLSKKKAKMPSASTESRRDWGRGMACVGRTKECTIVPSNHYGPIPGIPVGSTWRFRVQVSEAGVHRPHVGGIHGRSNDGAYSLVLAGGFEDEVDRGDEFTYTGSGGKNLAGNKRIGAPSADQTLTNMNRALALNCDAPLDDKIGAESRNWRAGKPVRVIRSFKGRKISKYAPEEGNRYDGIYKVVKYWPEISSSHGFLVWRYLLRRDDVEPAPWTSEGIERSRRLCLRLQYPAGYPSEKEGKKTKGQSKKQGSEATKRPASDDECPGDSKVLKASDSTDAVEAFQLTPQQQRLIREDCQNQKLWDEVLASLVEGPNFLKKLEQSFMCVCCQELVYQPVTTECFHNVCKDCLQRSFKAQVFSCPACRHDLGQNYVMVLNETLQTLLDLFFPGYSKGR.

The Ubiquitin-like domain occupies 1–78 (MWIQVRTIDG…IQLLVRPDSS (78 aa)). Composition is skewed to polar residues over residues 79 to 96 (LPSTSKQNDAQVKPSSHN), 106 to 115 (GGSSSQPSTS), 167 to 181 (KNGSSYKRTNGNVNH), and 189 to 200 (KLDNVPSTSNSD). Disordered regions lie at residues 79-115 (LPSTSKQNDAQVKPSSHNPPKVKKTARGGSSSQPSTS) and 154-200 (RASD…SNSD). The tract at residues 118–312 (TCLIDPGFGL…VDEIFKIEKP (195 aa)) is required for interaction with histone H3. The segment at 195–289 (STSNSDSVAA…KEVRVKVFLG (95 aa)) is interaction with PCNP. A PHD-type zinc finger spans residues 340–396 (DKTCHMCSCHKCGEKRDPNMQLLCDECNMAYHIYCLSPPLDKVPEEEYWYCPSCKTD). The tract at residues 415-645 (KMPSASTESR…LQYPAGYPSE (231 aa)) is methyl-CpG binding and interaction with HDAC1. Residues 449 to 613 (GPIPGIPVGS…FLVWRYLLRR (165 aa)) form the YDG domain. Residues 643–676 (PSEKEGKKTKGQSKKQGSEATKRPASDDECPGDS) form a disordered region. Over residues 658-668 (QGSEATKRPAS) the composition is skewed to basic and acidic residues. Ser668 carries the post-translational modification Phosphoserine. The RING-type zinc finger occupies 734–773 (CVCCQELVYQPVTTECFHNVCKDCLQRSFKAQVFSCPACR).

Homodimer; disulfide-linked. Binds methylated CpG containing oligonucleotides. Interacts with H3; the interaction has a preference for the 'Lys-9' trimethylated form of H3 (H3K9me3). Interacts with PCNP. Interacts with HDAC1. Interacts directly with CCNE1; the interaction ubiquitinates CCNE1 and appears independent of CCNE1 phosphorylation. Interacts with CCND1; the interaction ubiquitinates CCND1 and appears independent of CCND1 phosphorylation. Interacts with p53/TP53 and RB1. Interacts with UBE2I. Interacts with ZNF618. Interacts with UHRF1. Interacts with FANCD2. Interacts with ATR. Interacts with PCNA. Post-translationally, may be autoubiquitinated; which may lead to proteasomal degradation. In terms of processing, phosphorylated. Phosphorylation may be mediated by CDK2. Autosumoylated. In terms of tissue distribution, mostly detected in several tissues, including the thymus, spleen, lung, adrenal gland, and ovary. In addition, found in several tissues in the brain (cerebellum, hippocampus, and cerebral cortex).

The protein localises to the nucleus. Its subcellular location is the chromosome. It catalyses the reaction S-ubiquitinyl-[E2 ubiquitin-conjugating enzyme]-L-cysteine + [acceptor protein]-L-lysine = [E2 ubiquitin-conjugating enzyme]-L-cysteine + N(6)-ubiquitinyl-[acceptor protein]-L-lysine.. It participates in protein modification; protein ubiquitination. Its activity is regulated as follows. E3 ligase activity is robustly activated by 5-hydroxy-methylcytosine. E3 ubiquitin ligase that plays important roles in DNA methylation, histone modifications, cell cycle and DNA repair. Acts as a specific reader for 5-hydroxymethylcytosine (5hmC) and thereby recruits various substrates to these sites to ubiquitinate them. This activity also allows the maintenance of 5mC levels at specific genomic loci and regulates neuron-related gene expression. Participates in cell cycle regulation by ubiquitinating cyclins CCND1 and CCNE1 and thus inducing G1 arrest. Also ubiquitinates PCNP leading to its degradation by the proteasome. Plays an active role in DNA damage repair by ubiquitinating p21/CDKN1A leading to its proteasomal degradation. Also promotes DNA repair by acting as an interstrand cross-links (ICLs) sensor. Mechanistically, cooperates with UHRF1 to ensure recruitment of FANCD2 to ICLs, leading to FANCD2 monoubiquitination and subsequent activation. Contributes to UV-induced DNA damage response by physically interacting with ATR in response to irradiation, thereby promoting ATR activation. This is E3 ubiquitin-protein ligase UHRF2 (Uhrf2) from Mus musculus (Mouse).